We begin with the raw amino-acid sequence, 333 residues long: Fructose-1,6-bisphosphatase class 1 (333 aa).

Glu-92, Asp-113, Leu-115, and Asp-116 together coordinate Mg(2+). Substrate is bound by residues 116–119 (DGSS), Asn-209, Tyr-242, and Lys-272. Mg(2+) is bound at residue Glu-278.

It belongs to the FBPase class 1 family. As to quaternary structure, homotetramer. The cofactor is Mg(2+).

It localises to the cytoplasm. It catalyses the reaction beta-D-fructose 1,6-bisphosphate + H2O = beta-D-fructose 6-phosphate + phosphate. It participates in carbohydrate biosynthesis; Calvin cycle. This is Fructose-1,6-bisphosphatase class 1 from Chlorobium luteolum (strain DSM 273 / BCRC 81028 / 2530) (Pelodictyon luteolum).